Here is a 593-residue protein sequence, read N- to C-terminus: uncharacterized protein (593 aa).

A run of 12 helical transmembrane segments spans residues 21 to 41 (PAVFIPASVVIVAMIVVSVVY), 60 to 80 (VGWWYILVATGFVVFALYCGI), 97 to 117 (FSFWAWLAMLFSAGMGIGLVF), 148 to 168 (MALTVFHWGLHAWAIYVVVGL), 204 to 224 (VDVIAIVGTLFGVATSLGFGI), 243 to 263 (WMVGMIAAITATATASVVSGV), 275 to 295 (MALAAALALFVLLLGPTLFLL), 328 to 348 (WTIFYWGWWISWAPFVGMFIA), 359 to 379 (FIGAVLLVPTVIASLWFTIFG), 410 to 430 (GLPIGAITSVLAVLVIVFFFV), 457 to 477 (VYWAVLEGVAAAVLLLIGGAG), and 485 to 505 (AAIATALPFSIVMVVACYAMT).

Belongs to the BCCT transporter (TC 2.A.15) family.

The protein resides in the cell membrane. This is an uncharacterized protein from Mycobacterium tuberculosis (strain CDC 1551 / Oshkosh).